The sequence spans 293 residues: 1D-myo-inositol 2-acetamido-2-deoxy-alpha-D-glucopyranoside deacetylase (293 aa).

Residues H16, D19, and H156 each coordinate Zn(2+).

It belongs to the MshB deacetylase family. It depends on Zn(2+) as a cofactor.

It catalyses the reaction 1D-myo-inositol 2-acetamido-2-deoxy-alpha-D-glucopyranoside + H2O = 1D-myo-inositol 2-amino-2-deoxy-alpha-D-glucopyranoside + acetate. Its function is as follows. Catalyzes the deacetylation of 1D-myo-inositol 2-acetamido-2-deoxy-alpha-D-glucopyranoside (GlcNAc-Ins) in the mycothiol biosynthesis pathway. This is 1D-myo-inositol 2-acetamido-2-deoxy-alpha-D-glucopyranoside deacetylase from Nakamurella multipartita (strain ATCC 700099 / DSM 44233 / CIP 104796 / JCM 9543 / NBRC 105858 / Y-104) (Microsphaera multipartita).